We begin with the raw amino-acid sequence, 661 residues long: DNA ligase (661 aa).

NAD(+) is bound by residues 31 to 35 (DKEYD), 79 to 80 (SL), and Glu112. Catalysis depends on Lys114, which acts as the N6-AMP-lysine intermediate. NAD(+) is bound by residues Arg135, Glu169, Lys281, and Lys305. Zn(2+)-binding residues include Cys398, Cys401, Cys414, and Cys420. Positions 578-661 (QQENIFLGKT…ISEAEFEAML (84 aa)) constitute a BRCT domain.

Belongs to the NAD-dependent DNA ligase family. LigA subfamily. Mg(2+) serves as cofactor. Requires Mn(2+) as cofactor.

The enzyme catalyses NAD(+) + (deoxyribonucleotide)n-3'-hydroxyl + 5'-phospho-(deoxyribonucleotide)m = (deoxyribonucleotide)n+m + AMP + beta-nicotinamide D-nucleotide.. Its function is as follows. DNA ligase that catalyzes the formation of phosphodiester linkages between 5'-phosphoryl and 3'-hydroxyl groups in double-stranded DNA using NAD as a coenzyme and as the energy source for the reaction. It is essential for DNA replication and repair of damaged DNA. This Alkaliphilus oremlandii (strain OhILAs) (Clostridium oremlandii (strain OhILAs)) protein is DNA ligase.